The primary structure comprises 138 residues: Lutropin subunit beta (138 aa).

The first 19 residues, 1 to 19 (RYQELTVLLLLLLEGGSWG), serve as a signal peptide directing secretion. 6 cysteine pairs are disulfide-bonded: cysteine 27–cysteine 75, cysteine 41–cysteine 90, cysteine 44–cysteine 128, cysteine 52–cysteine 106, cysteine 56–cysteine 108, and cysteine 111–cysteine 118. N-linked (GlcNAc...) asparagine glycosylation occurs at asparagine 31.

The protein belongs to the glycoprotein hormones subunit beta family. As to quaternary structure, heterodimer of a common alpha chain and a unique beta chain which confers biological specificity to thyrotropin, lutropin, follitropin and gonadotropin.

It localises to the secreted. Promotes spermatogenesis and ovulation by stimulating the testes and ovaries to synthesize steroids. This is Lutropin subunit beta (LHB) from Osphranter rufus (Red kangaroo).